Here is a 189-residue protein sequence, read N- to C-terminus: Peptidyl-tRNA hydrolase (189 aa).

Tyr-15 is a binding site for tRNA. His-20 serves as the catalytic Proton acceptor. TRNA-binding residues include Phe-66, Asn-68, and Asn-114.

It belongs to the PTH family. As to quaternary structure, monomer.

It is found in the cytoplasm. The catalysed reaction is an N-acyl-L-alpha-aminoacyl-tRNA + H2O = an N-acyl-L-amino acid + a tRNA + H(+). Its function is as follows. Hydrolyzes ribosome-free peptidyl-tRNAs (with 1 or more amino acids incorporated), which drop off the ribosome during protein synthesis, or as a result of ribosome stalling. Catalyzes the release of premature peptidyl moieties from peptidyl-tRNA molecules trapped in stalled 50S ribosomal subunits, and thus maintains levels of free tRNAs and 50S ribosomes. This is Peptidyl-tRNA hydrolase from Streptococcus pyogenes serotype M6 (strain ATCC BAA-946 / MGAS10394).